The primary structure comprises 53 residues: Light-harvesting protein B800/850/890 beta-1 chain (53 aa).

Residues Ala1–Ser19 are Cytoplasmic-facing. 2 residues coordinate a bacteriochlorophyll: His18 and His36. A helical transmembrane segment spans residues Ile20–Trp42. Residues Arg43 to Gly53 are Periplasmic-facing.

Belongs to the antenna complex beta subunit family. The core complex is formed by different alpha and beta chains, binding bacteriochlorophyll molecules, and arranged most probably in tetrameric structures disposed around the reaction center. The non-pigmented gamma chains may constitute additional components.

It localises to the cell inner membrane. Functionally, antenna complexes are light-harvesting systems, which transfer the excitation energy to the reaction centers. The chain is Light-harvesting protein B800/850/890 beta-1 chain from Halorhodospira halophila (strain DSM 244 / SL1) (Ectothiorhodospira halophila (strain DSM 244 / SL1)).